We begin with the raw amino-acid sequence, 134 residues long: Translation initiation factor 2 subunit beta (134 aa).

Belongs to the eIF-2-beta/eIF-5 family. As to quaternary structure, heterotrimer composed of an alpha, a beta and a gamma chain.

Its function is as follows. eIF-2 functions in the early steps of protein synthesis by forming a ternary complex with GTP and initiator tRNA. This is Translation initiation factor 2 subunit beta from Pyrobaculum aerophilum (strain ATCC 51768 / DSM 7523 / JCM 9630 / CIP 104966 / NBRC 100827 / IM2).